The sequence spans 231 residues: MTVTIALPSKGRMKDESSAIFERAGMRITAVGNDRSYRGRVEGVEDVEITFLSASEIAREIGSGAVDFGVTGEDLVREGLADADARVEFAARLGFGHADVVVAVPEIWYDVDTMADLGDVAADFRARHGRRLAIATKYWRLTQQFFSGSHGIQLYRIVESLGATEGAPASGSADIIVDITSTGSTLKANHLKILSDGVILRSEACLVRARKAEHGGNPLIDRILAAVRSAL.

It belongs to the ATP phosphoribosyltransferase family. Short subfamily. In terms of assembly, heteromultimer composed of HisG and HisZ subunits.

The protein resides in the cytoplasm. It carries out the reaction 1-(5-phospho-beta-D-ribosyl)-ATP + diphosphate = 5-phospho-alpha-D-ribose 1-diphosphate + ATP. The protein operates within amino-acid biosynthesis; L-histidine biosynthesis; L-histidine from 5-phospho-alpha-D-ribose 1-diphosphate: step 1/9. Its function is as follows. Catalyzes the condensation of ATP and 5-phosphoribose 1-diphosphate to form N'-(5'-phosphoribosyl)-ATP (PR-ATP). Has a crucial role in the pathway because the rate of histidine biosynthesis seems to be controlled primarily by regulation of HisG enzymatic activity. In Sinorhizobium medicae (strain WSM419) (Ensifer medicae), this protein is ATP phosphoribosyltransferase.